Here is a 203-residue protein sequence, read N- to C-terminus: SCO2-like protein RT0576 (203 aa).

The region spanning 42 to 203 (KDNIKIGEAF…KEIMEFLRNE (162 aa)) is the Thioredoxin domain. 3 residues coordinate Cu cation: Cys-80, Cys-84, and His-170.

The protein belongs to the SCO1/2 family.

The chain is SCO2-like protein RT0576 from Rickettsia typhi (strain ATCC VR-144 / Wilmington).